The sequence spans 922 residues: Histidine kinase 5 (922 aa).

2 coiled-coil regions span residues 86 to 120 (MQDN…EEYK) and 169 to 205 (KQKA…SQSA). Residues 373 to 614 (TMSHEIRSPL…TFTFILPYKV (242 aa)) enclose the Histidine kinase domain. His376 is modified (phosphohistidine; by autocatalysis). Disordered stretches follow at residues 620-639 (YSDD…EPDD) and 728-773 (NGRC…TEVK). Positions 738–747 (SCSSSQASSE) are enriched in low complexity. Residues 761–773 (SHREEEKAETEVK) are compositionally biased toward basic and acidic residues. Positions 779 to 921 (KILLVEDNKI…KLRECLQQYL (143 aa)) constitute a Response regulatory domain. Mg(2+)-binding residues include Asp785, Asp828, and Cys830. Asp828 carries the post-translational modification 4-aspartylphosphate.

As to quaternary structure, interacts with AHP1, APH2, APH3, APH5 and APH6, but not with APH4. As to expression, present in light-grown but not in etiolated seedlings. Mostly expressed in roots flowers and siliques, and, to a lower extent, in stems and leaves, especially in guard cells.

The protein localises to the cell membrane. It localises to the cytoplasm. It carries out the reaction ATP + protein L-histidine = ADP + protein N-phospho-L-histidine.. Functions as a histidine kinase and transmits the stress signal to a downstream MAPK cascade. This protein undergoes an ATP-dependent autophosphorylation at a conserved histidine residue in the kinase core, and a phosphoryl group is then transferred to a conserved aspartate residue in the receiver domain. Negative regulator of the ETR1-dependent abscisic acid (ABA) and ethylene signaling pathway that inhibits the root elongation. Promotes stomatal closure. Regulates stomatal opening by integrating multiple signals via hydrogen peroxide H(2)O(2) homeostasis in guard cells in an ABA-independent manner. May contribute to basal defense mechanisms by closing stomata in the presence of bacterial pathogens. Regulates both hormone levels and ROS production in response to stress. Required for full immunity to bacterial pathogen and necrotrophic fungus. This chain is Histidine kinase 5 (AHK5), found in Arabidopsis thaliana (Mouse-ear cress).